A 270-amino-acid polypeptide reads, in one-letter code: SURF1-like protein (270 aa).

2 helical membrane passes run 7-29 and 246-265; these read GFKL…VYRY and YIGT…FRYM.

The protein belongs to the SURF1 family.

It is found in the mitochondrion inner membrane. In terms of biological role, probably involved in the biogenesis of the COX complex. The protein is SURF1-like protein (surf1-1) of Dictyostelium discoideum (Social amoeba).